Here is a 307-residue protein sequence, read N- to C-terminus: Mitochondrial brown fat uncoupling protein 1 (307 aa).

The Mitochondrial intermembrane portion of the chain corresponds to 2-10 (VNPTTSEVH). Residues 11-32 (PTMGVKIFSAGVAACLADIITF) form a helical membrane-spanning segment. 3 Solcar repeats span residues 11-102 (PTMG…VQEY), 111-201 (PTLG…MKGA), and 210-295 (DDVP…LKKE). The Mitochondrial matrix segment spans residues 33 to 73 (PLDTAKVRLQIQGEGQISSTIRYKGVLGTITTLAKTEGLPK). Position 56 (Lys-56) interacts with fatty acid 16:0. A helical transmembrane segment spans residues 74 to 96 (LYSGLPAGIQRQISFASLRIGLY). At 97–116 (DTVQEYFSSGKETPPTLGNR) the chain is on the mitochondrial intermembrane side. The chain crosses the membrane as a helical span at residues 117 to 133 (ISAGLMTGGVAVFIGQP). Residues 134–178 (TEVVKVRLQAQSHLHGIKPRYTGTYNAYRIIATTESFSTLWKGTT) are Mitochondrial matrix-facing. The chain crosses the membrane as a helical span at residues 179–195 (PNLLRNVIINCVELVTY). Topologically, residues 196–212 (DLMKGALVNNQILADDV) are mitochondrial intermembrane. Residues 213 to 232 (PCHLLSAFVAGFCTTFLASP) form a helical membrane-spanning segment. Over 233–266 (ADVVKTRFINSLPGQYPSVPSCAMTMLTKEGPTA) the chain is Mitochondrial matrix. A Cysteine sulfenic acid (-SOH) modification is found at Cys-254. Residues 267–289 (FFKGFVPSFLRLASWNVIMFVCF) traverse the membrane as a helical segment. Fatty acid 16:0 is bound at residue Lys-269. At 290–307 (EQLKKELSKSRQTVDCTT) the chain is on the mitochondrial intermembrane side.

This sequence belongs to the mitochondrial carrier (TC 2.A.29) family. In terms of assembly, most probably functions as a monomer. Binds one purine nucleotide per monomer. However, has also been suggested to function as a homodimer or a homotetramer. Tightly associates with cardiolipin in the mitochondrion inner membrane; may stabilize and regulate its activity. May undergo sulfenylation upon cold exposure. May increase the sensitivity of UCP1 thermogenic function to the activation by noradrenaline probably through structural effects. In terms of processing, may undergo ubiquitin-mediated proteasomal degradation. In terms of tissue distribution, brown adipose tissue.

The protein resides in the mitochondrion inner membrane. It catalyses the reaction H(+)(in) = H(+)(out). Has no constitutive proton transporter activity and has to be activated by long-chain fatty acids/LCFAs. Inhibited by purine nucleotides. Both purine nucleotides and LCFAs bind the cytosolic side of the transporter and directly compete to activate or inhibit it. Activated by noradrenaline and reactive oxygen species. Despite lacking canonical translational encoding for selenocysteine, a small pool of the protein has been observed to selectively incorporate selenocysteine at 'Cys-254'. Selenocysteine-modified protein is highly sensitive to redox modification and may constitute a pool of protein highly sensitive to activation by elevated levels of reactive oxygen species (ROS). Mitochondrial protein responsible for thermogenic respiration, a specialized capacity of brown adipose tissue and beige fat that participates in non-shivering adaptive thermogenesis to temperature and diet variations and more generally to the regulation of energy balance. Functions as a long-chain fatty acid/LCFA and proton symporter, simultaneously transporting one LCFA and one proton through the inner mitochondrial membrane. However, LCFAs remaining associated with the transporter via their hydrophobic tails, it results in an apparent transport of protons activated by LCFAs. Thereby, dissipates the mitochondrial proton gradient and converts the energy of substrate oxydation into heat instead of ATP. Regulates the production of reactive oxygen species/ROS by mitochondria. The polypeptide is Mitochondrial brown fat uncoupling protein 1 (Mesocricetus auratus (Golden hamster)).